The following is a 188-amino-acid chain: Calcium load-activated calcium channel (188 aa).

Residues 1–4 (MSTM) are Lumenal-facing. Residues 5-32 (FADTILIVFISICTALLAEGITWVLVYR) form a helical membrane-spanning segment. Residues 32–89 (RTDKYKRLKAEVEKQSKKLEKKKETITESAGRQQKKKIERQEEKLKNNNRDLSMVRMK) adopt a coiled-coil conformation. The Cytoplasmic segment spans residues 33–86 (TDKYKRLKAEVEKQSKKLEKKKETITESAGRQQKKKIERQEEKLKNNNRDLSMV). Residues 87–106 (RMKSMFAIGFCFTALMGMFN) form a helical membrane-spanning segment. The Lumenal segment spans residues 107-120 (SIFDGRVVAKLPFV). The stretch at 121 to 130 (PLSYIQGLSH) is an intramembrane region. The Lumenal portion of the chain corresponds to 131–140 (RNLLGEDYTD). A helical membrane pass occupies residues 141 to 162 (CSFIFLYILCTMSIRQNIQKML). Residues 163–188 (GLAPSRAATKQAGGFLGPPPQAAKFS) are Cytoplasmic-facing.

It belongs to the TMCO1 family. As to quaternary structure, homodimer and homotetramer. Component of the multi-pass translocon (MPT) complex.

The protein localises to the endoplasmic reticulum membrane. Its subcellular location is the golgi apparatus membrane. Its function is as follows. Calcium-selective channel required to prevent calcium stores from overfilling, thereby playing a key role in calcium homeostasis. In response to endoplasmic reticulum (ER) overloading, assembles into a homotetramer, forming a functional calcium-selective channel, regulating the calcium content in endoplasmic reticulum store. Component of the multi-pass translocon (MPT) complex that mediates insertion of multi-pass membrane proteins into the lipid bilayer of membranes. This Danio rerio (Zebrafish) protein is Calcium load-activated calcium channel.